Reading from the N-terminus, the 180-residue chain is MKGGKRVQTARPNRINGEIRAQEVRLTGLEGEQLGIVSLREAIEKAEEAGVDLVEISPNAEPPVCRIMDYGKFLYEKSKSSKEQKKKQKVIQVKEIKFRPGTDEGDYQVKLRSLIRFLEDGDKAKITLRFRGREMAHQQIGMEVLNRVKDDLVELAVVEAFPTKIEGRQMIMVLAPKKKQ.

Belongs to the IF-3 family. Monomer.

The protein localises to the cytoplasm. IF-3 binds to the 30S ribosomal subunit and shifts the equilibrium between 70S ribosomes and their 50S and 30S subunits in favor of the free subunits, thus enhancing the availability of 30S subunits on which protein synthesis initiation begins. In Klebsiella pneumoniae, this protein is Translation initiation factor IF-3.